The following is a 159-amino-acid chain: MAVQLVLNFIIAVFWLFVTNSYTTNNFVLGFIFGLVLVYLLHRVLPGRFYVITLYRIIKLIIIFLIELIKANFDVLKIIIKPSIKNEPGFFVYHTDLKKDWQIVLLSNLITLTPGTVVLGVSDDRTKIYIHAIDFSTKEQEVESIKTSLEKIVREVGEI.

A run of 4 helical transmembrane segments spans residues methionine 1 to serine 21, phenylalanine 27 to glycine 47, phenylalanine 49 to isoleucine 69, and tryptophan 101 to valine 121.

It belongs to the CPA3 antiporters (TC 2.A.63) subunit E family. May form a heterooligomeric complex that consists of seven subunits: mnhA1, mnhB1, mnhC1, mnhD1, mnhE1, mnhF1 and mnhG1.

The protein resides in the cell membrane. Functionally, mnh complex is a Na(+)/H(+) antiporter involved in Na(+) excretion. The sequence is that of Na(+)/H(+) antiporter subunit E1 (mnhE1) from Staphylococcus aureus (strain bovine RF122 / ET3-1).